Reading from the N-terminus, the 1336-residue chain is SH3 domain and tetratricopeptide repeat-containing protein 1 (1336 aa).

At Met1 the chain carries N-acetylmethionine. Disordered regions lie at residues Met1–Gln76 and Thr225–Val266. Gly residues predominate over residues Gly18–Ser27. A compositionally biased stretch (basic and acidic residues) spans Ala46 to Pro61. 2 stretches are compositionally biased toward low complexity: residues Pro62–Pro74 and Glu247–Val266. Residues Met305–Pro368 enclose the SH3 domain. TPR repeat units lie at residues Ala560–Ser593, Val601–Thr634, Ala665–Ser698, Gly786–Ala819, Gly863–Leu896, Thr946–Met979, Gly1027–Leu1063, and Arg1192–Pro1225. Tyr1248 carries the phosphotyrosine modification. The stretch at Leu1277–Leu1311 is one TPR 9 repeat.

The sequence is that of SH3 domain and tetratricopeptide repeat-containing protein 1 (SH3TC1) from Homo sapiens (Human).